The chain runs to 369 residues: Biglycan (369 aa).

The signal sequence occupies residues 1 to 16; the sequence is MWPLWPLAALLALSQA. The propeptide occupies 17–37; that stretch reads LPFEQKAFWDFTLDDGLPMLN. O-linked (Xyl...) (glycosaminoglycan) serine glycans are attached at residues Ser-42 and Ser-48. 2 disulfide bridges follow: Cys-64/Cys-70 and Cys-68/Cys-77. 12 LRR repeats span residues 83–103, 104–127, 128–151, 152–172, 173–196, 197–221, 222–242, 243–266, 267–290, 291–313, 314–343, and 344–369; these read KAVP…NNDI, SELR…NNKI, SKIH…KNHL, VEIP…DNRI, RKVP…GNPL, ENSG…EAKL, TGIP…HNKI, QAIE…HNQI, RMIE…NNKL, SRVP…TNNI, TKVG…NNPV, and PYWE…NYKK. O-linked (Xyl...) (glycosaminoglycan) serine glycosylation is found at Ser-181 and Ser-199. N-linked (GlcNAc...) asparagine glycosylation is found at Asn-271 and Asn-312. Cys-322 and Cys-355 are disulfide-bonded.

The protein belongs to the small leucine-rich proteoglycan (SLRP) family. SLRP class I subfamily. Homodimer. Forms a ternary complex with MFAP2 and ELN. The two attached glycosaminoglycan chains can be either chondroitin sulfate or dermatan sulfate. Found in several connective tissues, especially in articular cartilages.

Its subcellular location is the secreted. The protein localises to the extracellular space. It localises to the extracellular matrix. Its function is as follows. May be involved in collagen fiber assembly. The protein is Biglycan (BGN) of Bos taurus (Bovine).